A 185-amino-acid polypeptide reads, in one-letter code: Coordinator of PRMT5 and differentiation stimulator (185 aa).

Met1 bears the N-acetylmethionine mark. Residues 1-109 form a disordered region; it reads MDPPTAGAQS…MSGCLPKEQA (109 aa). 2 stretches are compositionally biased toward basic and acidic residues: residues 42-52 and 66-77; these read SSQEKATENAT and SPAHGEGTHCEE. A Phosphoserine modification is found at Ser66. Over residues 78-89 the composition is skewed to acidic residues; sequence EGFAEDDEDSDG.

Interacts with PRMT5. Interacts with histone H4; specifically interacts with the N-terminus of histone H4 but not with histone H3. Interacts with CBFB. Found in a complex with PRMT5, RUNX1 and CBFB.

The protein localises to the nucleus. Histone-binding protein required for histone H4 methyltransferase activity of PRMT5. Specifically required for histone H4 'Arg-3' methylation mediated by PRMT5, but not histone H3 'Arg-8' methylation, suggesting that it modulates the substrate specificity of PRMT5. Specifically interacts with the N-terminus of histone H4 but not with histone H3, suggesting that it acts by promoting the association between histone H4 and PRMT5. Involved in CCNE1 promoter repression. Plays a role in muscle cell differentiation by modulating the recruitment of PRMT5 to the promoter of genes involved in the coordination between cell cycle exit and muscle differentiation. The protein is Coordinator of PRMT5 and differentiation stimulator (COPRS) of Bos taurus (Bovine).